The primary structure comprises 510 residues: Glutamate--tRNA ligase (510 aa).

The 'HIGH' region signature appears at 15–25 (PSPTGDPHVGT). A 'KMSKS' region motif is present at residues 256–260 (KISKR). Lys259 contributes to the ATP binding site.

It belongs to the class-I aminoacyl-tRNA synthetase family. Glutamate--tRNA ligase type 1 subfamily. Monomer.

The protein localises to the cytoplasm. It catalyses the reaction tRNA(Glu) + L-glutamate + ATP = L-glutamyl-tRNA(Glu) + AMP + diphosphate. Catalyzes the attachment of glutamate to tRNA(Glu) in a two-step reaction: glutamate is first activated by ATP to form Glu-AMP and then transferred to the acceptor end of tRNA(Glu). This is Glutamate--tRNA ligase from Fusobacterium nucleatum subsp. nucleatum (strain ATCC 25586 / DSM 15643 / BCRC 10681 / CIP 101130 / JCM 8532 / KCTC 2640 / LMG 13131 / VPI 4355).